The following is a 954-amino-acid chain: Glycine dehydrogenase (decarboxylating) (954 aa).

K706 is subject to N6-(pyridoxal phosphate)lysine.

Belongs to the GcvP family. As to quaternary structure, the glycine cleavage system is composed of four proteins: P, T, L and H. The cofactor is pyridoxal 5'-phosphate.

The enzyme catalyses N(6)-[(R)-lipoyl]-L-lysyl-[glycine-cleavage complex H protein] + glycine + H(+) = N(6)-[(R)-S(8)-aminomethyldihydrolipoyl]-L-lysyl-[glycine-cleavage complex H protein] + CO2. The glycine cleavage system catalyzes the degradation of glycine. The P protein binds the alpha-amino group of glycine through its pyridoxal phosphate cofactor; CO(2) is released and the remaining methylamine moiety is then transferred to the lipoamide cofactor of the H protein. The polypeptide is Glycine dehydrogenase (decarboxylating) (Pseudomonas syringae pv. syringae (strain B728a)).